A 339-amino-acid polypeptide reads, in one-letter code: Cathepsin B (339 aa).

The N-terminal stretch at 1–17 (MWQLWASLCCLLALADA) is a signal peptide. A propeptide spans 18 to 79 (RSRPSFHPLS…QRVMFTEDLK (62 aa)) (activation peptide). Intrachain disulfides connect Cys-93-Cys-122, Cys-105-Cys-150, Cys-141-Cys-207, Cys-142-Cys-146, Cys-179-Cys-211, and Cys-187-Cys-198. Residue Cys-108 is part of the active site. N-linked (GlcNAc...) asparagine glycosylation occurs at Asn-192. Lys-220 carries the post-translational modification N6-acetyllysine. Active-site residues include His-278 and Asn-298. Positions 334 to 339 (QYWEKI) are excised as a propeptide.

The protein belongs to the peptidase C1 family. As to quaternary structure, dimer of a heavy chain and a light chain cross-linked by a disulfide bond. Interacts with SRPX2. Directly interacts with SHKBP1.

Its subcellular location is the lysosome. It is found in the melanosome. The protein localises to the secreted. The protein resides in the extracellular space. It localises to the apical cell membrane. It carries out the reaction Hydrolysis of proteins with broad specificity for peptide bonds. Preferentially cleaves -Arg-Arg-|-Xaa bonds in small molecule substrates (thus differing from cathepsin L). In addition to being an endopeptidase, shows peptidyl-dipeptidase activity, liberating C-terminal dipeptides.. Functionally, thiol protease which is believed to participate in intracellular degradation and turnover of proteins. Cleaves matrix extracellular phosphoglycoprotein MEPE. Involved in the solubilization of cross-linked TG/thyroglobulin in the thyroid follicle lumen. Has also been implicated in tumor invasion and metastasis. The sequence is that of Cathepsin B (CTSB) from Pongo abelii (Sumatran orangutan).